A 577-amino-acid polypeptide reads, in one-letter code: Aspartate--tRNA(Asp) ligase (577 aa).

Position 172 (glutamate 172) interacts with L-aspartate. An aspartate region spans residues 196 to 199; the sequence is QLFK. Arginine 218 lines the L-aspartate pocket. ATP is bound by residues 218–220 and glutamine 227; that span reads RDE. An L-aspartate-binding site is contributed by histidine 438. Glutamate 473 serves as a coordination point for ATP. L-aspartate is bound at residue arginine 480. 525–528 contributes to the ATP binding site; that stretch reads GFDR.

This sequence belongs to the class-II aminoacyl-tRNA synthetase family. Type 1 subfamily. In terms of assembly, homodimer.

It is found in the cytoplasm. It carries out the reaction tRNA(Asp) + L-aspartate + ATP = L-aspartyl-tRNA(Asp) + AMP + diphosphate. Functionally, catalyzes the attachment of L-aspartate to tRNA(Asp) in a two-step reaction: L-aspartate is first activated by ATP to form Asp-AMP and then transferred to the acceptor end of tRNA(Asp). Is specific for tRNA(Asp) since it cannot aspartylate tRNA(Asn). The sequence is that of Aspartate--tRNA(Asp) ligase (aspS1) from Deinococcus radiodurans (strain ATCC 13939 / DSM 20539 / JCM 16871 / CCUG 27074 / LMG 4051 / NBRC 15346 / NCIMB 9279 / VKM B-1422 / R1).